Consider the following 668-residue polypeptide: Spartin (668 aa).

N-acetylmethionine is present on Met1. The region spanning 16–94 (IKEAYKKAFV…LQNVRTRLEI (79 aa)) is the MIT domain. The segment at 110-176 (VPKLYPEFPP…PSEAPPAYTP (67 aa)) is disordered. The span at 118–127 (PPKDMSEKSP) shows a compositional bias: basic and acidic residues. Phosphoserine is present on Ser126. Low complexity predominate over residues 128-162 (EPQSLSSLPQHSEVNGSTSTASAESSSTPTTLSLP). The ubiquitin-binding region (UBR) domain stretch occupies residues 190–380 (ESGEFSSVGE…QLDPSSKDVR (191 aa)). The LC3-interacting region (LIR); mediates interaction with MAP1LC3A AND MAP1LC3C signature appears at 193–200 (EFSSVGEN). Residues 348-396 (FQIPGISGSASDQLKEASGTDVRQLDPSSKDVRQKGKRGKKTKGTSSEE) form a disordered region. A Glycyl lysine isopeptide (Lys-Gly) (interchain with G-Cter in ubiquitin) cross-link involves residue Lys362. A Senescence domain is found at 427–611 (ILSGASWVSW…YNIDNIGIKA (185 aa)). The segment at 431-503 (ASWVSWGLVK…LVDGVCTVAN (73 aa)) is required for localization to lipid droplets. Ser470 bears the Phosphoserine mark. The disordered stretch occupies residues 631–668 (IDNSKGENPGGGASANLKGEKDEQKEGPEKNGAKKKDK). Positions 648–668 (KGEKDEQKEGPEKNGAKKKDK) are enriched in basic and acidic residues.

In terms of assembly, interacts with ITCH and WWP1. Interacts (via MIT domain) with IST1; leading to the recruitment of SPART to midbodies. Interacts with MAP1LC3A and MAP1LC3C. Ubiquitinated; ubiquitination does not require ITCH and WWP1.

Its subcellular location is the cytoplasm. It is found in the midbody. The protein localises to the lipid droplet. Functionally, lipophagy receptor that plays an important role in lipid droplet (LD) turnover in motor neurons. Localizes to LDs and interacts with components of the autophagy machinery, such as MAP1LC3A/C proteins to deliver LDs to autophagosomes for degradation via lipophagy. Lipid transfer protein required for lipid droplet degradation, including by lipophagy. Can bind and transfer all lipid species found in lipid droplets, from phospholipids to triglycerides and sterol esters but the direction of lipid transfer by spartin and its cargos are unknown. May be implicated in endosomal trafficking, or microtubule dynamics, or both. Participates in cytokinesis. The sequence is that of Spartin from Bos taurus (Bovine).